The following is a 286-amino-acid chain: D-tagatose-1,6-bisphosphate aldolase subunit KbaY (286 aa).

Catalysis depends on Asp-82, which acts as the Proton donor. Zn(2+) contacts are provided by His-83 and His-180. Residue Gly-181 participates in dihydroxyacetone phosphate binding. A Zn(2+)-binding site is contributed by His-208. Dihydroxyacetone phosphate is bound by residues 209-211 (GAS) and 230-233 (NVAT).

Belongs to the class II fructose-bisphosphate aldolase family. TagBP aldolase KbaY subfamily. Homotetramer. Forms a complex with KbaZ. Zn(2+) is required as a cofactor.

It carries out the reaction D-tagatofuranose 1,6-bisphosphate = D-glyceraldehyde 3-phosphate + dihydroxyacetone phosphate. It functions in the pathway carbohydrate metabolism; D-tagatose 6-phosphate degradation; D-glyceraldehyde 3-phosphate and glycerone phosphate from D-tagatose 6-phosphate: step 2/2. In terms of biological role, catalytic subunit of the tagatose-1,6-bisphosphate aldolase KbaYZ, which catalyzes the reversible aldol condensation of dihydroxyacetone phosphate (DHAP or glycerone-phosphate) with glyceraldehyde 3-phosphate (G3P) to produce tagatose 1,6-bisphosphate (TBP). Requires KbaZ subunit for full activity and stability. This chain is D-tagatose-1,6-bisphosphate aldolase subunit KbaY, found in Escherichia coli O17:K52:H18 (strain UMN026 / ExPEC).